A 167-amino-acid polypeptide reads, in one-letter code: Interferon gamma (167 aa).

A signal peptide spans Met-1–Cys-23. Position 24 is a pyrrolidone carboxylic acid (Gln-24). N-linked (GlcNAc...) asparagine glycosylation is found at Asn-39 and Asn-107.

The protein belongs to the type II (or gamma) interferon family. As to quaternary structure, homodimer. Interacts with IFNGR1 (via extracellular domain); this interaction promotes IFNGR1 dimerization. In terms of tissue distribution, released primarily from activated T lymphocytes.

The protein localises to the secreted. Functionally, type II interferon produced by immune cells such as T-cells and NK cells that plays crucial roles in antimicrobial, antiviral, and antitumor responses by activating effector immune cells and enhancing antigen presentation. Primarily signals through the JAK-STAT pathway after interaction with its receptor IFNGR1 to affect gene regulation. Upon IFNG binding, IFNGR1 intracellular domain opens out to allow association of downstream signaling components JAK2, JAK1 and STAT1, leading to STAT1 activation, nuclear translocation and transcription of IFNG-regulated genes. Many of the induced genes are transcription factors such as IRF1 that are able to further drive regulation of a next wave of transcription. Plays a role in class I antigen presentation pathway by inducing a replacement of catalytic proteasome subunits with immunoproteasome subunits. In turn, increases the quantity, quality, and repertoire of peptides for class I MHC loading. Increases the efficiency of peptide generation also by inducing the expression of activator PA28 that associates with the proteasome and alters its proteolytic cleavage preference. Up-regulates as well MHC II complexes on the cell surface by promoting expression of several key molecules such as cathepsins B/CTSB, H/CTSH, and L/CTSL. Participates in the regulation of hematopoietic stem cells during development and under homeostatic conditions by affecting their development, quiescence, and differentiation. This Felis catus (Cat) protein is Interferon gamma (IFNG).